The sequence spans 365 residues: tRNA-specific 2-thiouridylase MnmA (365 aa).

ATP is bound by residues 14 to 21 and Leu-40; that span reads AMSGGVDS. Cys-108 functions as the Nucleophile in the catalytic mechanism. Cys-108 and Cys-204 are oxidised to a cystine. Gly-132 serves as a coordination point for ATP. The tract at residues 154 to 156 is interaction with tRNA; it reads KDQ. Cys-204 functions as the Cysteine persulfide intermediate in the catalytic mechanism.

This sequence belongs to the MnmA/TRMU family.

It is found in the cytoplasm. It carries out the reaction S-sulfanyl-L-cysteinyl-[protein] + uridine(34) in tRNA + AH2 + ATP = 2-thiouridine(34) in tRNA + L-cysteinyl-[protein] + A + AMP + diphosphate + H(+). Functionally, catalyzes the 2-thiolation of uridine at the wobble position (U34) of tRNA, leading to the formation of s(2)U34. The protein is tRNA-specific 2-thiouridylase MnmA of Rickettsia akari (strain Hartford).